Consider the following 646-residue polypeptide: Leukotriene A-4 hydrolase homolog (646 aa).

Residues 172 to 174 (QCQ) and 307 to 312 (PYGGME) contribute to the a peptide site. Residue histidine 336 coordinates Zn(2+). Glutamate 337 acts as the Proton acceptor in catalysis. Zn(2+) contacts are provided by histidine 340 and glutamate 359. Tyrosine 424 acts as the Proton donor in catalysis.

It belongs to the peptidase M1 family. Zn(2+) serves as cofactor.

It is found in the cytoplasm. Its subcellular location is the nucleus. The enzyme catalyses leukotriene A4 + H2O = leukotriene B4. Its pathway is lipid metabolism; leukotriene B4 biosynthesis. In terms of biological role, aminopeptidase that preferentially cleaves tripeptides. Also has low epoxide hydrolase activity (in vitro). Can hydrolyze an epoxide moiety of LTA(4) to form LTB(4) (in vitro). The polypeptide is Leukotriene A-4 hydrolase homolog (Botryotinia fuckeliana (strain B05.10) (Noble rot fungus)).